The chain runs to 449 residues: Probable protoheme IX farnesyltransferase, mitochondrial (449 aa).

A compositionally biased stretch (low complexity) spans Thr99 to Gln138. A disordered region spans residues Thr99–Lys140. The next 7 helical transmembrane spans lie at Leu163–Leu183, Met245–Trp267, Thr279–Gly299, Ala303–Leu323, Ser352–Phe372, Val374–Ile394, and Leu402–Gln422.

The protein belongs to the UbiA prenyltransferase family.

Its subcellular location is the mitochondrion membrane. In terms of biological role, converts protoheme IX and farnesyl diphosphate to heme O. In Dictyostelium discoideum (Social amoeba), this protein is Probable protoheme IX farnesyltransferase, mitochondrial (cox10).